A 453-amino-acid chain; its full sequence is tRNA modification GTPase MnmE (453 aa).

3 residues coordinate (6S)-5-formyl-5,6,7,8-tetrahydrofolate: Arg-22, Glu-79, and Lys-119. The TrmE-type G domain occupies Gly-215 to Gly-376. Asn-225 contacts K(+). GTP-binding positions include Asn-225–Ser-230, Thr-244–Thr-250, Asp-269–Gly-272, and Asn-334–Asp-337. Ser-229 provides a ligand contact to Mg(2+). The K(+) site is built by Thr-244, Ile-246, and Thr-249. Thr-250 serves as a coordination point for Mg(2+). Residue Lys-453 participates in (6S)-5-formyl-5,6,7,8-tetrahydrofolate binding.

This sequence belongs to the TRAFAC class TrmE-Era-EngA-EngB-Septin-like GTPase superfamily. TrmE GTPase family. In terms of assembly, homodimer. Heterotetramer of two MnmE and two MnmG subunits. The cofactor is K(+).

The protein resides in the cytoplasm. Functionally, exhibits a very high intrinsic GTPase hydrolysis rate. Involved in the addition of a carboxymethylaminomethyl (cmnm) group at the wobble position (U34) of certain tRNAs, forming tRNA-cmnm(5)s(2)U34. In Shewanella woodyi (strain ATCC 51908 / MS32), this protein is tRNA modification GTPase MnmE.